The sequence spans 790 residues: SH3 domain-containing protein 19 (790 aa).

Disordered regions lie at residues 21-196 and 241-374; these read EGQT…PVLQ and EPIK…MDLQ. Ser-65 is modified (phosphoserine). Over residues 287–296 the composition is skewed to polar residues; it reads NTFSTVSGKL. Over residues 336 to 351 the composition is skewed to pro residues; sequence QQPPTKVPPERPPPPK. The tract at residues 342–358 is interaction with SH3GL1; sequence VPPERPPPPKLSATRRS. A compositionally biased stretch (polar residues) spans 365 to 374; it reads NRSSSDMDLQ. A Phosphoserine modification is found at Ser-369. 5 SH3 domains span residues 415–477, 495–554, 571–630, 661–720, and 730–789; these read LSVP…PLDE, SGAP…VIID, VKGS…PVED, LPAE…PCPA, and PKGR…FLQI. Ser-762 carries the phosphoserine modification.

Interacts with ADAM12. Isoform 4 and isoform 5 (but not isoform 1 and isoform 2) interact with ADAM9, ADAM10, ADAM15 and ADAM17. Interacts with SH3GL1 SH3 domain. Interacts via SH3 3 and SH3 4 or SH3 4 and SH3 5 domains with SOS2. Probably forms a trimeric complex with SH3GL1 and SOS2. Interacts with SH3YL1. In terms of tissue distribution, widely expressed with highest levels in heart, skeletal muscle, kidney, liver, placenta, small intestine and lung. Expressed at low levels in colon, thymus, spleen and leukocytes.

The protein resides in the cytoplasm. Its subcellular location is the nucleus. In terms of biological role, may play a role in regulating A disintegrin and metalloproteases (ADAMs) in the signaling of EGFR-ligand shedding. May be involved in suppression of Ras-induced cellular transformation and Ras-mediated activation of ELK1. Plays a role in the regulation of cell morphology and cytoskeletal organization. This Homo sapiens (Human) protein is SH3 domain-containing protein 19 (SH3D19).